Consider the following 131-residue polypeptide: Large-conductance mechanosensitive channel (131 aa).

The next 3 helical transmembrane spans lie at 8 to 28 (FAVRGNVIDLAVGVIIGGAFG), 30 to 50 (IVSSLVNDIIMPLVGLILGGI), and 67 to 87 (GAFLQTVVDFLVIAFSIFLFV).

Belongs to the MscL family. Homopentamer.

It is found in the cell membrane. Functionally, channel that opens in response to stretch forces in the membrane lipid bilayer. May participate in the regulation of osmotic pressure changes within the cell. The chain is Large-conductance mechanosensitive channel from Anoxybacillus flavithermus (strain DSM 21510 / WK1).